The following is a 231-amino-acid chain: Cilia- and flagella-associated protein 299 (231 aa).

The protein localises to the cytoplasm. The protein resides in the nucleus. May be involved in spermatogenesis. The protein is Cilia- and flagella-associated protein 299 of Bos taurus (Bovine).